The primary structure comprises 338 residues: tRNA N6-adenosine threonylcarbamoyltransferase (338 aa).

Residues His-111 and His-115 each contribute to the Fe cation site. Substrate-binding positions include 134 to 138, Asp-167, Gly-180, and Asn-272; that span reads LVSGG. Asp-300 contacts Fe cation.

This sequence belongs to the KAE1 / TsaD family. The cofactor is Fe(2+).

It localises to the cytoplasm. The enzyme catalyses L-threonylcarbamoyladenylate + adenosine(37) in tRNA = N(6)-L-threonylcarbamoyladenosine(37) in tRNA + AMP + H(+). Functionally, required for the formation of a threonylcarbamoyl group on adenosine at position 37 (t(6)A37) in tRNAs that read codons beginning with adenine. Is involved in the transfer of the threonylcarbamoyl moiety of threonylcarbamoyl-AMP (TC-AMP) to the N6 group of A37, together with TsaE and TsaB. TsaD likely plays a direct catalytic role in this reaction. This is tRNA N6-adenosine threonylcarbamoyltransferase from Shewanella halifaxensis (strain HAW-EB4).